Reading from the N-terminus, the 190-residue chain is Secretory phospholipase A2 (190 aa).

The N-terminal stretch at 1 to 15 (MKLAYFSSLLPLALA) is a signal peptide. A disulfide bridge connects residues cysteine 62 and cysteine 78. Position 65 (alanine 65) interacts with Ca(2+). Histidine 81 is an active-site residue. Residue aspartate 82 participates in Ca(2+) binding.

Belongs to the phospholipase A2 family. Ca(2+) serves as cofactor.

Its subcellular location is the lipid droplet. The protein resides in the secreted. The catalysed reaction is a 1,2-diacyl-sn-glycero-3-phosphocholine + H2O = a 1-acyl-sn-glycero-3-phosphocholine + a fatty acid + H(+). Secretory phospholipase that catalyzes the calcium-dependent hydrolysis of the 2-acyl groups in 3-sn-phosphoglycerides. Increases the ability to utilize insect-derived nutrients and lipids, and promotes lipid dropplets accumulation. Plays a role in virulence, including more efficient penetration of the insect cuticle and evasion of host immune response by repressing the expression of host immunity genes. The chain is Secretory phospholipase A2 from Beauveria bassiana (strain ARSEF 2860) (White muscardine disease fungus).